Reading from the N-terminus, the 313-residue chain is Pyrimidine-specific ribonucleoside hydrolase RihB (313 aa).

Asp11 acts as the Proton acceptor in catalysis. 3 residues coordinate Ca(2+): Asp11, Asp16, and Val124. Positions 227 and 239 each coordinate substrate. Residue Asp240 coordinates Ca(2+).

This sequence belongs to the IUNH family. RihB subfamily. As to quaternary structure, homotetramer. Ca(2+) is required as a cofactor.

It catalyses the reaction a pyrimidine ribonucleoside + H2O = a pyrimidine nucleobase + D-ribose. Functionally, hydrolyzes cytidine or uridine to ribose and cytosine or uracil, respectively. Has a clear preference for cytidine over uridine. Strictly specific for ribonucleosides. This Shigella sonnei (strain Ss046) protein is Pyrimidine-specific ribonucleoside hydrolase RihB.